Consider the following 415-residue polypeptide: MDELLEKAKKVREAWDVLRNATTREKNKAIKKIAEKLDERRKEILEANRIDVEKARERGVKESLVDRLALNDKRIDEMIKACETVIGLKDPVGEVIDSWVREDGLRIARVRVPIGPIGIIYESRPNVTVETTILALKSGNTILLRGGSDALNSNKAIVSAIREALKETEIPESSVEFIENTDRSLVLEMIRLREYLSLVIPRGGYGLISFVRDNATVPVLETGVGNCHIFVDESADLKKAVPVIINAKTQRPGTCNAAEKLLVHEKIAKEFLPVIVEELRKHGVEVRGCEKTREIVPDVVPATEDDWPTEYLDLIIAIKVVKNVDEAIEHIKKYSTGHSESILTENYSNAKKFVSEIDAAAVYVNASTRFTDGGQFGFGAEIGISTQRFHARGPVGLRELTTYKFVVLGEYHVRE.

This sequence belongs to the gamma-glutamyl phosphate reductase family.

The protein resides in the cytoplasm. The enzyme catalyses L-glutamate 5-semialdehyde + phosphate + NADP(+) = L-glutamyl 5-phosphate + NADPH + H(+). It participates in amino-acid biosynthesis; L-proline biosynthesis; L-glutamate 5-semialdehyde from L-glutamate: step 2/2. Functionally, catalyzes the NADPH-dependent reduction of L-glutamate 5-phosphate into L-glutamate 5-semialdehyde and phosphate. The product spontaneously undergoes cyclization to form 1-pyrroline-5-carboxylate. This is Gamma-glutamyl phosphate reductase from Thermotoga maritima (strain ATCC 43589 / DSM 3109 / JCM 10099 / NBRC 100826 / MSB8).